Here is a 977-residue protein sequence, read N- to C-terminus: Disks large-associated protein 3 (977 aa).

Basic and acidic residues predominate over residues 1 to 10 (MRGYHGDRGS). 6 disordered regions span residues 1–24 (MRGYHGDRGSHPRPARFADQQHMD), 52–96 (AGLG…MYPG), 137–167 (FHTLPYQRGPAGPGPGPGSGAAPEARSESPS), 181–289 (AKSH…CLDA), 398–417 (AMGDEESGDSDGSPKTSPKA), and 529–582 (PGSS…SADG). The span at 53–73 (GLGHLSPEGPLSLSEGPSSVG) shows a compositional bias: low complexity. Ser-58 is subject to Phosphoserine. Gly residues predominate over residues 74-87 (PEGGPGGVGAGGGS). Positions 189–201 (PGKRDYNGPKADG) are enriched in basic and acidic residues. Positions 221-245 (SHHHHHHHHHHHHQSRHGKRSKSKD) are enriched in basic residues. Residues 258–271 (GWWSSDDNLDSDSG) show a composition bias toward low complexity. A phosphoserine mark is found at Ser-404, Ser-407, Ser-410, and Ser-414. A compositionally biased stretch (pro residues) spans 538–547 (APPPIPPGSQ). 2 positions are modified to phosphoserine: Ser-641 and Ser-643. Disordered regions lie at residues 739–788 (EGYP…RTSP) and 906–939 (EEKKVPPPIPKKPSRGRGVPVKERSLDSVDRQRQ). 2 stretches are compositionally biased toward basic and acidic residues: residues 767–777 (GRRDSWMERGS) and 925–939 (PVKERSLDSVDRQRQ). Phosphoserine is present on residues Ser-930, Ser-933, and Ser-965.

This sequence belongs to the SAPAP family. In terms of assembly, interacts with DLG4/PSD-95. In terms of tissue distribution, highly expressed in central and peripherical nervous system (at protein level).

It localises to the cell membrane. It is found in the postsynaptic density. The protein localises to the synapse. In terms of biological role, may play a role in the molecular organization of synapses and neuronal cell signaling. Could be an adapter protein linking ion channel to the subsynaptic cytoskeleton. May induce enrichment of PSD-95/SAP90 at the plasma membrane. The protein is Disks large-associated protein 3 (Dlgap3) of Mus musculus (Mouse).